A 121-amino-acid chain; its full sequence is Basic phospholipase A2 homolog (121 aa).

Disulfide bonds link Cys26/Cys115, Cys28/Cys44, Cys43/Cys95, Cys49/Cys121, Cys50/Cys88, Cys57/Cys81, and Cys75/Cys86.

It belongs to the phospholipase A2 family. Group II subfamily. K49 sub-subfamily. Homodimer. As to expression, expressed by the venom gland.

The protein localises to the secreted. Its function is as follows. Snake venom phospholipase A2 homolog that lacks enzymatic activity, but has myotoxic and cytolytic activities. This Metlapilcoatlus nummifer (Mexican jumping pitviper) protein is Basic phospholipase A2 homolog.